We begin with the raw amino-acid sequence, 151 residues long: Deoxyuridine 5'-triphosphate nucleotidohydrolase (151 aa).

Substrate contacts are provided by residues 70–72 (RSG), Asn83, 87–89 (LID), and Met97.

This sequence belongs to the dUTPase family. It depends on Mg(2+) as a cofactor.

The enzyme catalyses dUTP + H2O = dUMP + diphosphate + H(+). It functions in the pathway pyrimidine metabolism; dUMP biosynthesis; dUMP from dCTP (dUTP route): step 2/2. This enzyme is involved in nucleotide metabolism: it produces dUMP, the immediate precursor of thymidine nucleotides and it decreases the intracellular concentration of dUTP so that uracil cannot be incorporated into DNA. The polypeptide is Deoxyuridine 5'-triphosphate nucleotidohydrolase (Yersinia enterocolitica serotype O:8 / biotype 1B (strain NCTC 13174 / 8081)).